The following is a 396-amino-acid chain: Chaperone protein DnaJ (396 aa).

The J domain maps to 6 to 71 (DYYEVLEVTK…DKRSRYDQFG (66 aa)). A CR-type zinc finger spans residues 154–236 (GVEKKFKLKK…CGGDGIVYGE (83 aa)). The Zn(2+) site is built by Cys-167, Cys-170, Cys-184, Cys-187, Cys-210, Cys-213, Cys-224, and Cys-227. CXXCXGXG motif repeat units lie at residues 167-174 (CNHCHGTG), 184-191 (CPTCKGSG), 210-217 (CPTCNGEG), and 224-231 (CKECGGDG).

Belongs to the DnaJ family. As to quaternary structure, homodimer. Requires Zn(2+) as cofactor.

It localises to the cytoplasm. Participates actively in the response to hyperosmotic and heat shock by preventing the aggregation of stress-denatured proteins and by disaggregating proteins, also in an autonomous, DnaK-independent fashion. Unfolded proteins bind initially to DnaJ; upon interaction with the DnaJ-bound protein, DnaK hydrolyzes its bound ATP, resulting in the formation of a stable complex. GrpE releases ADP from DnaK; ATP binding to DnaK triggers the release of the substrate protein, thus completing the reaction cycle. Several rounds of ATP-dependent interactions between DnaJ, DnaK and GrpE are required for fully efficient folding. Also involved, together with DnaK and GrpE, in the DNA replication of plasmids through activation of initiation proteins. The chain is Chaperone protein DnaJ from Bacteroides thetaiotaomicron (strain ATCC 29148 / DSM 2079 / JCM 5827 / CCUG 10774 / NCTC 10582 / VPI-5482 / E50).